We begin with the raw amino-acid sequence, 609 residues long: tRNA 5-methylaminomethyl-2-thiouridine biosynthesis bifunctional protein MnmC (609 aa).

Residues 1-229 (MVELAAATCL…TRNTLPARAM (229 aa)) form a tRNA (mnm(5)s(2)U34)-methyltransferase region. Residues 237–609 (IGAGLAGASV…SPELPVSCAP (373 aa)) form an FAD-dependent cmnm(5)s(2)U34 oxidoreductase region.

It in the N-terminal section; belongs to the methyltransferase superfamily. tRNA (mnm(5)s(2)U34)-methyltransferase family. In the C-terminal section; belongs to the DAO family. FAD is required as a cofactor.

It is found in the cytoplasm. It catalyses the reaction 5-aminomethyl-2-thiouridine(34) in tRNA + S-adenosyl-L-methionine = 5-methylaminomethyl-2-thiouridine(34) in tRNA + S-adenosyl-L-homocysteine + H(+). Its function is as follows. Catalyzes the last two steps in the biosynthesis of 5-methylaminomethyl-2-thiouridine (mnm(5)s(2)U) at the wobble position (U34) in tRNA. Catalyzes the FAD-dependent demodification of cmnm(5)s(2)U34 to nm(5)s(2)U34, followed by the transfer of a methyl group from S-adenosyl-L-methionine to nm(5)s(2)U34, to form mnm(5)s(2)U34. This Albidiferax ferrireducens (strain ATCC BAA-621 / DSM 15236 / T118) (Rhodoferax ferrireducens) protein is tRNA 5-methylaminomethyl-2-thiouridine biosynthesis bifunctional protein MnmC (mnmC).